A 475-amino-acid chain; its full sequence is MAPQTETKTGTGFQAGVKDYRLTYYTPDYQVKETDILAAFRMTPQPGVPAEECGAAVAAESSTGTWTTVWTDGLTQLDRYKGRCYDLEPVPGEDNQFIAYVAYPLDLFEEGSVTNLFTSIVGNVFGFKALRALRLEDLRIPVAYCKTFQGAPHGIQTERDKLNKYGRGLLGCTIKPKLGLSAKNYGRAVYECLRGGLDFTKDDENVNSQPFMRWRDRFLFVAEAIYKSQAETGEIKGHYLNATAGNVDQMLKRAQVAKELGMPIIMHDYLTAGFTANTTLATYCREEGLLLHIHRAMHAVIDRQRNHGIHFRVLAKALRLSGGDHLHSGTVVGKLEGERNVTLGFVDLMRDAYVEKDRDRGIYFSQDWASLPGVMPVASGGIHVWHMPALVEIFGDDACLQFGGGTLGHPWGNAPGASANRVALEACTQARNEGRDLAREGGDVIRAACKWSPELAAACEVWKEIKFEFDTVDTL.

Residues 1–2 (MA) constitute a propeptide that is removed on maturation. Position 3 is an N-acetylproline (Pro-3). Asn-123 and Thr-173 together coordinate substrate. Residue Lys-175 is the Proton acceptor of the active site. Lys-177 is a substrate binding site. Residues Lys-201, Asp-203, and Glu-204 each coordinate Mg(2+). Lys-201 carries the post-translational modification N6-carboxylysine. His-294 serves as the catalytic Proton acceptor. Substrate-binding residues include Arg-295, His-327, and Ser-379.

Belongs to the RuBisCO large chain family. Type I subfamily. As to quaternary structure, heterohexadecamer of 8 large chains and 8 small chains. It depends on Mg(2+) as a cofactor.

The protein resides in the plastid. The protein localises to the chloroplast. It carries out the reaction 2 (2R)-3-phosphoglycerate + 2 H(+) = D-ribulose 1,5-bisphosphate + CO2 + H2O. The catalysed reaction is D-ribulose 1,5-bisphosphate + O2 = 2-phosphoglycolate + (2R)-3-phosphoglycerate + 2 H(+). In terms of biological role, ruBisCO catalyzes two reactions: the carboxylation of D-ribulose 1,5-bisphosphate, the primary event in carbon dioxide fixation, as well as the oxidative fragmentation of the pentose substrate in the photorespiration process. Both reactions occur simultaneously and in competition at the same active site. In Ostreococcus tauri, this protein is Ribulose bisphosphate carboxylase large chain.